The sequence spans 208 residues: Uracil phosphoribosyltransferase (208 aa).

Residues Arg-78, Arg-103, and 130 to 138 (DPMLATGGS) contribute to the 5-phospho-alpha-D-ribose 1-diphosphate site. Uracil-binding positions include Ile-193 and 198-200 (GDA). Asp-199 is a binding site for 5-phospho-alpha-D-ribose 1-diphosphate.

The protein belongs to the UPRTase family. The cofactor is Mg(2+).

The enzyme catalyses UMP + diphosphate = 5-phospho-alpha-D-ribose 1-diphosphate + uracil. The protein operates within pyrimidine metabolism; UMP biosynthesis via salvage pathway; UMP from uracil: step 1/1. Allosterically activated by GTP. Functionally, catalyzes the conversion of uracil and 5-phospho-alpha-D-ribose 1-diphosphate (PRPP) to UMP and diphosphate. The polypeptide is Uracil phosphoribosyltransferase (Aeromonas salmonicida (strain A449)).